The sequence spans 264 residues: Small ribosomal subunit protein uS3 (264 aa).

The KH type-2 domain maps to 39-107; that stretch reads VREYLKKKLK…PVHVNIEEIR (69 aa). Residues 214-264 form a disordered region; sequence PVETAAPREEERRPRRAPRGDRPDGARNGRPGGGRGRAPRKADAAPAPEGE. Over residues 219-240 the composition is skewed to basic and acidic residues; it reads APREEERRPRRAPRGDRPDGAR.

The protein belongs to the universal ribosomal protein uS3 family. Part of the 30S ribosomal subunit. Forms a tight complex with proteins S10 and S14.

In terms of biological role, binds the lower part of the 30S subunit head. Binds mRNA in the 70S ribosome, positioning it for translation. The sequence is that of Small ribosomal subunit protein uS3 from Bordetella avium (strain 197N).